The following is a 903-amino-acid chain: Protein translocase subunit SecA (903 aa).

ATP contacts are provided by residues glutamine 89, 107-111, and aspartate 502; that span reads GEGKT. Residues cysteine 886, cysteine 888, cysteine 897, and histidine 898 each contribute to the Zn(2+) site.

The protein belongs to the SecA family. In terms of assembly, monomer and homodimer. Part of the essential Sec protein translocation apparatus which comprises SecA, SecYEG and auxiliary proteins SecDF-YajC and YidC. Zn(2+) serves as cofactor.

The protein resides in the cell inner membrane. It is found in the cytoplasm. It carries out the reaction ATP + H2O + cellular proteinSide 1 = ADP + phosphate + cellular proteinSide 2.. In terms of biological role, part of the Sec protein translocase complex. Interacts with the SecYEG preprotein conducting channel. Has a central role in coupling the hydrolysis of ATP to the transfer of proteins into and across the cell membrane, serving both as a receptor for the preprotein-SecB complex and as an ATP-driven molecular motor driving the stepwise translocation of polypeptide chains across the membrane. The protein is Protein translocase subunit SecA of Sinorhizobium medicae (strain WSM419) (Ensifer medicae).